Consider the following 434-residue polypeptide: Beta-enolase (434 aa).

Ala-2 bears the N-acetylalanine mark. The residue at position 72 (Thr-72) is a Phosphothreonine. Ser-83 and Ser-157 each carry phosphoserine. Positions 158 and 167 each coordinate substrate. The residue at position 176 (Ser-176) is a Phosphoserine. Residue Thr-205 is modified to Phosphothreonine. Catalysis depends on Glu-210, which acts as the Proton donor. Thr-229 bears the Phosphothreonine mark. Tyr-236 is subject to Phosphotyrosine. Residue Asp-245 coordinates Mg(2+). Residue Ser-263 is modified to Phosphoserine. Residues Glu-293 and Asp-318 each contribute to the substrate site. Residues Glu-293 and Asp-318 each coordinate Mg(2+). Lys-343 acts as the Proton acceptor in catalysis. Residues 370–373 (SHRS) and Lys-394 each bind substrate.

Belongs to the enolase family. In terms of assembly, mammalian enolase is composed of 3 isozyme subunits, alpha, beta and gamma, which can form homodimers or heterodimers which are cell-type and development-specific. Interacts with PNKD. Mg(2+) serves as cofactor. The alpha/alpha homodimer is expressed in embryo and in most adult tissues. The alpha/beta heterodimer and the beta/beta homodimer are found in striated muscle, and the alpha/gamma heterodimer and the gamma/gamma homodimer in neurons.

It localises to the cytoplasm. The catalysed reaction is (2R)-2-phosphoglycerate = phosphoenolpyruvate + H2O. Its pathway is carbohydrate degradation; glycolysis; pyruvate from D-glyceraldehyde 3-phosphate: step 4/5. Functionally, glycolytic enzyme that catalyzes the conversion of 2-phosphoglycerate to phosphoenolpyruvate. Appears to have a function in striated muscle development and regeneration. This Rattus norvegicus (Rat) protein is Beta-enolase (Eno3).